Here is a 662-residue protein sequence, read N- to C-terminus: 72 kDa type IV collagenase (662 aa).

Positions 1 to 29 (MEARLVWGVLVGPLRVLCVLCCLLGHAIA) are cleaved as a signal peptide. The propeptide at 30 to 109 (APSPIIKFPG…PRCGNPDVAN (80 aa)) is activation peptide. The short motif at 100–107 (PRCGNPDV) is the Cysteine switch element. Cysteine 102 provides a ligand contact to Zn(2+). Residues 110-221 (YNFFPRKPKW…LWTLGEGQVV (112 aa)) are collagenase-like 1. Positions 134 and 168 each coordinate Ca(2+). Residues histidine 178 and aspartate 180 each coordinate Zn(2+). Positions 185 and 186 each coordinate Ca(2+). Histidine 193 serves as a coordination point for Zn(2+). Ca(2+) contacts are provided by glycine 200, glycine 202, and aspartate 204. Zn(2+) is bound at residue histidine 206. The Ca(2+) site is built by aspartate 208, aspartate 209, and glutamate 211. The interval 222–396 (RVKYGNADGE…WGFCPDQGYS (175 aa)) is collagen-binding. Fibronectin type-II domains follow at residues 228–276 (ADGE…FCPH), 286–334 (GDGQ…FCPE), and 344–392 (SEGA…FCPD). 6 cysteine pairs are disulfide-bonded: cysteine 233–cysteine 259, cysteine 247–cysteine 274, cysteine 291–cysteine 317, cysteine 305–cysteine 332, cysteine 349–cysteine 375, and cysteine 363–cysteine 390. The collagenase-like 2 stretch occupies residues 397–467 (LFLVAAHEFG…GPTPTLGPVT (71 aa)). Histidine 403 serves as a coordination point for Zn(2+). Glutamate 404 is a catalytic residue. The Zn(2+) site is built by histidine 407 and histidine 413. The tract at residues 414-662 (SQDPGALMAP…GSIKSDWLGC (249 aa)) is required for inhibitor TIMP2 binding. Residues cysteine 471 and cysteine 662 are joined by a disulfide bond. Hemopexin repeat units lie at residues 474–518 (DIVF…WPEL), 519–565 (PEKI…GLPP), 567–615 (VQQV…WNAI), and 616–662 (PDNL…WLGC). Ca(2+) is bound by residues aspartate 478, aspartate 523, and aspartate 571. An N-linked (GlcNAc...) asparagine glycan is attached at asparagine 575. Residue aspartate 620 participates in Ca(2+) binding. N-linked (GlcNAc...) asparagine glycosylation is present at asparagine 644.

This sequence belongs to the peptidase M10A family. Interacts (via the C-terminal hemopexin-like domains-containing region) with the integrin alpha-V/beta-3; the interaction promotes vascular invasion in angiogenic vessels and melamoma cells. Interacts (via the C-terminal PEX domain) with TIMP2 (via the C-terminal); the interaction inhibits the degradation activity. Interacts with GSK3B. Ca(2+) serves as cofactor. Requires Zn(2+) as cofactor. Phosphorylation on multiple sites modulates enzymatic activity. Phosphorylated by PKC in vitro. Post-translationally, the propeptide is processed by MMP14 (MT-MMP1) and MMP16 (MT-MMP3). Autocatalytic cleavage in the C-terminal produces the anti-angiogenic peptide, PEX. This processing appears to be facilitated by binding integrin integrinv/beta3.

The protein resides in the secreted. It is found in the extracellular space. It localises to the extracellular matrix. The protein localises to the membrane. Its subcellular location is the nucleus. The catalysed reaction is Cleavage of gelatin type I and collagen types IV, V, VII, X. Cleaves the collagen-like sequence Pro-Gln-Gly-|-Ile-Ala-Gly-Gln.. Functionally, ubiquitinous metalloproteinase that is involved in diverse functions such as remodeling of the vasculature, angiogenesis, tissue repair, tumor invasion, inflammation, and atherosclerotic plaque rupture. As well as degrading extracellular matrix proteins, can also act on several nonmatrix proteins such as big endothelial 1 and beta-type CGRP promoting vasoconstriction. Also cleaves KISS at a Gly-|-Leu bond. Appears to have a role in myocardial cell death pathways. Contributes to myocardial oxidative stress by regulating the activity of GSK3beta. Cleaves GSK3beta in vitro. Involved in the formation of the fibrovascular tissues. In terms of biological role, PEX, the C-terminal non-catalytic fragment of MMP2, possesses anti-angiogenic and anti-tumor properties and inhibits cell migration and cell adhesion to FGF2 and vitronectin. Ligand for integrin alpha-v/beta3 on the surface of blood vessels. In Rattus norvegicus (Rat), this protein is 72 kDa type IV collagenase (Mmp2).